Consider the following 462-residue polypeptide: Citrate synthase, mitochondrial (462 aa).

A mitochondrion-targeting transit peptide spans 1-21 (MRSINQLLKQASLSQKSQYNF). Catalysis depends on residues H300, H346, and D401.

This sequence belongs to the citrate synthase family. In terms of assembly, homodimer.

It is found in the mitochondrion matrix. Its subcellular location is the cytoplasm. It localises to the cytoskeleton. The enzyme catalyses oxaloacetate + acetyl-CoA + H2O = citrate + CoA + H(+). Its pathway is carbohydrate metabolism; tricarboxylic acid cycle; isocitrate from oxaloacetate: step 1/2. In terms of biological role, structural protein involved in oral morphogenesis and in pronuclear behavior during conjugation. Respiratory enzyme. This chain is Citrate synthase, mitochondrial, found in Tetrahymena thermophila.